A 515-amino-acid chain; its full sequence is Envelope glycoprotein (515 aa).

The first 33 residues, 1–33, serve as a signal peptide directing secretion; sequence MPKERRSRRRPQPIIRWVSLTLTLLALCQPIQT. At 34–436 the chain is on the extracellular side; that stretch reads WRCSLSLGNQ…GLTAWVRETI (403 aa). Asn129 and Asn203 each carry an N-linked (GlcNAc...) asparagine; by host glycan. Residues 212–215 carry the CXXC motif; that stretch reads CAIC. 3 disulfide bridges follow: Cys212–Cys215, Cys212–Cys392, and Cys384–Cys391. N-linked (GlcNAc...) asparagine; by host glycosylation is found at Asn230, Asn251, Asn256, Asn271, and Asn287. The segment at 304 to 324 is fusion peptide; that stretch reads VAALTLGLALSVGLTGINVAV. 2 coiled-coil regions span residues 330 to 376 and 388 to 420; these read QRLT…WLYI and NEPCCFLRIQNDSIIRLGDLQPLSQRVSTDWQW. N-linked (GlcNAc...) asparagine; by host glycosylation occurs at Asn351. The immunosuppression stretch occupies residues 365–381; sequence AQNRRGLDWLYIRLGFQ. The short motif at 384 to 392 is the CX6CC element; it reads CPTINEPCC. N-linked (GlcNAc...) asparagine; by host glycosylation occurs at Asn398. A helical membrane pass occupies residues 437–457; sequence HSVLSLFLLALFLLFLAPCLI. A lipid anchor (S-palmitoyl cysteine; by host) is attached at Cys455. The Cytoplasmic portion of the chain corresponds to 458–515; that stretch reads KCLTSRLLKLLRQAPHFPEISFPPKPDSDYQALLPSAPEIYSHLSPTKPDYINLRPCP.

In terms of assembly, the mature envelope protein (Env) consists of a trimer of SU-TM heterodimers attached by a labile interchain disulfide bond. Post-translationally, specific enzymatic cleavages in vivo yield mature proteins. Envelope glycoproteins are synthesized as an inactive precursor that is N-glycosylated and processed likely by host cell furin or by a furin-like protease in the Golgi to yield the mature SU and TM proteins. The cleavage site between SU and TM requires the minimal sequence [KR]-X-[KR]-R. In terms of processing, the CXXC motif is highly conserved across a broad range of retroviral envelope proteins. It is thought to participate in the formation of a labile disulfide bond possibly with the CX6CC motif present in the transmembrane protein. Isomerization of the intersubunit disulfide bond to an SU intrachain disulfide bond is thought to occur upon receptor recognition in order to allow membrane fusion. The transmembrane protein is palmitoylated.

It localises to the virion membrane. Its subcellular location is the host cell membrane. Functionally, the surface protein (SU) attaches the virus to the host cell by binding to its receptor. This interaction triggers the refolding of the transmembrane protein (TM) and is thought to activate its fusogenic potential by unmasking its fusion peptide. Fusion occurs at the host cell plasma membrane. In terms of biological role, the transmembrane protein (TM) acts as a class I viral fusion protein. Under the current model, the protein has at least 3 conformational states: pre-fusion native state, pre-hairpin intermediate state, and post-fusion hairpin state. During viral and target cell membrane fusion, the coiled coil regions (heptad repeats) assume a trimer-of-hairpins structure, positioning the fusion peptide in close proximity to the C-terminal region of the ectodomain. The formation of this structure appears to drive apposition and subsequent fusion of viral and target cell membranes. Membranes fusion leads to delivery of the nucleocapsid into the cytoplasm. In Bos taurus (Bovine), this protein is Envelope glycoprotein (env).